A 728-amino-acid chain; its full sequence is Catalase-peroxidase 1 (728 aa).

Residues 91-218 (WHSAGTYRTA…LAAVQMGLIY (128 aa)) constitute a cross-link (tryptophyl-tyrosyl-methioninium (Trp-Tyr) (with M-244)). Residue histidine 92 is the Proton acceptor of the active site. Residues 218-244 (YVNPEGPDGNPDPVAAAHDIRETFARM) constitute a cross-link (tryptophyl-tyrosyl-methioninium (Tyr-Met) (with W-91)). Histidine 259 is a binding site for heme b.

Belongs to the peroxidase family. Peroxidase/catalase subfamily. In terms of assembly, homodimer or homotetramer. Heme b is required as a cofactor. Post-translationally, formation of the three residue Trp-Tyr-Met cross-link is important for the catalase, but not the peroxidase activity of the enzyme.

It catalyses the reaction H2O2 + AH2 = A + 2 H2O. It carries out the reaction 2 H2O2 = O2 + 2 H2O. In terms of biological role, bifunctional enzyme with both catalase and broad-spectrum peroxidase activity. In Burkholderia cenocepacia (strain HI2424), this protein is Catalase-peroxidase 1.